A 905-amino-acid polypeptide reads, in one-letter code: NADH-quinone oxidoreductase subunit G (905 aa).

Positions 1-83 (MATIHVDGKT…NTWISIEDEE (83 aa)) constitute a 2Fe-2S ferredoxin-type domain. Residues Cys-34, Cys-45, Cys-48, and Cys-67 each coordinate [2Fe-2S] cluster. Positions 83–122 (EAKQFRASVVEWLMTNHPHDCPVCEEGGHCHLQDMTVMTG) constitute a 4Fe-4S His(Cys)3-ligated-type domain. Residues His-99, Cys-103, Cys-106, Cys-112, Cys-151, Cys-154, Cys-157, Cys-201, Cys-228, Cys-231, Cys-235, and Cys-263 each coordinate [4Fe-4S] cluster. The region spanning 221–277 (MQFAPSICHGCSSGCNISPGERYGEIRRIENRYNGSVNHYFLCDRGRFGYGYVNRED) is the 4Fe-4S Mo/W bis-MGD-type domain.

This sequence belongs to the complex I 75 kDa subunit family. As to quaternary structure, composed of 13 different subunits. Subunits NuoCD, E, F, and G constitute the peripheral sector of the complex. The cofactor is [2Fe-2S] cluster. [4Fe-4S] cluster serves as cofactor.

The catalysed reaction is a quinone + NADH + 5 H(+)(in) = a quinol + NAD(+) + 4 H(+)(out). Functionally, NDH-1 shuttles electrons from NADH, via FMN and iron-sulfur (Fe-S) centers, to quinones in the respiratory chain. The immediate electron acceptor for the enzyme in this species is believed to be ubiquinone. Couples the redox reaction to proton translocation (for every two electrons transferred, four hydrogen ions are translocated across the cytoplasmic membrane), and thus conserves the redox energy in a proton gradient. The sequence is that of NADH-quinone oxidoreductase subunit G (nuoG) from Pseudomonas aeruginosa (strain ATCC 15692 / DSM 22644 / CIP 104116 / JCM 14847 / LMG 12228 / 1C / PRS 101 / PAO1).